A 436-amino-acid chain; its full sequence is S-locus-specific glycoprotein S6 (436 aa).

The signal sequence occupies residues 1–31 (MKGVRKPYDNSYTLSFLLVFFVLILFCPAFS). Residues 34 to 156 (TLSSTESLRI…SNNDASEYLW (123 aa)) form the Bulb-type lectin domain. Residues N46, N64, N114, N121, N245, N261, and N390 are each glycosylated (N-linked (GlcNAc...) asparagine). Residues 351 to 431 (CSGDGFTRMK…HGQDLYVRLA (81 aa)) form the PAN domain. 2 cysteine pairs are disulfide-bonded: C381/C406 and C389/C391.

As to expression, stigma.

Its function is as follows. Involved in sporophytic self-incompatibility system (the inability of flowering plants to achieve self-fertilization). This chain is S-locus-specific glycoprotein S6 (SLSG), found in Brassica oleracea (Wild cabbage).